A 509-amino-acid polypeptide reads, in one-letter code: Pyruvate kinase (509 aa).

Phosphoserine is present on Ser29. Arg56 contributes to the substrate binding site. K(+) is bound by residues Asn58 and Ser60. Position 58–61 (58–61 (NFSH)) interacts with ATP. Phosphoserine is present on Ser63. Residues Asp91 and Thr92 each contribute to the K(+) site. 2 residues coordinate ATP: Arg98 and Lys184. Position 249 (Glu249) interacts with Mg(2+). The substrate site is built by Gly272 and Asp273. Asp273 lines the Mg(2+) pocket. Phosphoserine is present on Ser281. Thr305 lines the substrate pocket. Ser412 carries the phosphoserine modification.

This sequence belongs to the pyruvate kinase family. Homotetramer. The cofactor is Mg(2+). K(+) is required as a cofactor.

The catalysed reaction is pyruvate + ATP = phosphoenolpyruvate + ADP + H(+). The protein operates within carbohydrate degradation; glycolysis; pyruvate from D-glyceraldehyde 3-phosphate: step 5/5. The protein is Pyruvate kinase (pyk1) of Schizosaccharomyces pombe (strain 972 / ATCC 24843) (Fission yeast).